The chain runs to 219 residues: Transmembrane protein 17B (219 aa).

Asn26 carries N-linked (GlcNAc...) asparagine glycosylation. 4 consecutive transmembrane segments (helical) span residues 51–71 (MMLY…IITM), 84–104 (ILLT…LYIG), 116–136 (LAGF…FLLT), and 147–167 (LAVH…SFLV). Asn195 and Asn203 each carry an N-linked (GlcNAc...) asparagine glycan.

It belongs to the TMEM17 family. As to quaternary structure, part of the tectonic-like complex (also named B9 complex).

It localises to the cell projection. The protein resides in the cilium membrane. In terms of biological role, transmembrane component of the tectonic-like complex, a complex localized at the transition zone of primary cilia and acting as a barrier that prevents diffusion of transmembrane proteins between the cilia and plasma membranes. Required for ciliogenesis and sonic hedgehog/SHH signaling. In Xenopus tropicalis (Western clawed frog), this protein is Transmembrane protein 17B (Tmem17-b).